Here is a 763-residue protein sequence, read N- to C-terminus: DNA-binding protein SATB1 (763 aa).

The span at 1–15 shows a compositional bias: basic and acidic residues; sequence MDHLNEATQGKEHSE. Residues 1–54 form a disordered region; it reads MDHLNEATQGKEHSEMSNNVSDPKGPPAKIARLEQNGSPLGRGRLGSTGAKMQG. Residues 20 to 40 carry the Nuclear localization signal motif; that stretch reads VSDPKGPPAKIARLEQNGSPL. Lys51 participates in a covalent cross-link: Glycyl lysine isopeptide (Lys-Gly) (interchain with G-Cter in SUMO2). A CMP domain is found at 71–172; it reads GTMLPVFCVV…VVTLKIQLHS (102 aa). Lys136 bears the N6-acetyllysine mark. The short motif at 139–143 is the Protein interaction element; that stretch reads PVPLS. The CUTL domain maps to 175–248; that stretch reads KLEDLPPEQW…WYKHFKKTKD (74 aa). Ser185 is subject to Phosphoserine. The tract at residues 224–278 is nuclear matrix targeting sequence (NMTS); sequence YYANVSAAKCQEFGRWYKHFKKTKDMMVEMDSLSELSQQGANHVNFGQQPVPGNT. The segment covering 266 to 296 has biased composition (polar residues); that stretch reads HVNFGQQPVPGNTAEQPPSPAQLSHGSQPSV. The disordered stretch occupies residues 266-307; that stretch reads HVNFGQQPVPGNTAEQPPSPAQLSHGSQPSVRTPLPNLHPGL. 2 DNA-binding regions (CUT) span residues 361 to 448 and 484 to 571; these read LEQQ…QDER and NGKP…EQES. Residues Gln390, 400-410, and Asn425 each bind DNA; that span reads RTQGLLSEILR. Over residues 591-607 the composition is skewed to low complexity; the sequence is QIQQQQQQQQQQQQQQQ. A disordered region spans residues 591–649; that stretch reads QIQQQQQQQQQQQQQQQAPPPPQPQQQPQTGPRLPPRQPTVASPAESDEENRQKTRPRT. Ser637 carries the post-translational modification Phosphoserine. The segment at residues 645–704 is a DNA-binding region (homeobox); that stretch reads TRPRTKISVEALGILQSFIQDVGLYPDEEAIQTLSAQLDLPKYTIIKFFQNQRYYLKHHG. Lys744 is covalently cross-linked (Glycyl lysine isopeptide (Lys-Gly) (interchain with G-Cter in SUMO)).

Belongs to the CUT homeobox family. Interacts with CUX1 (via DNA-binding domains); the interaction inhibits the attachment of both proteins to DNA. Homodimer. Part of the nuclear protein complex gamma-globin promoter and enhancer binding factor (gamma-PE) composed at least of SATB1 and HOXB2. Interaction with CtBP1 when not acetylated stabilizes attachment to DNA and promotes transcription repression. Interacts with PCAF. Interacts with sumoylated PML and HDAC1 via the CMP domain. Interacts also with DYNLT3 and POLR2J2. Binds to EP300. As to quaternary structure, (Microbial infection) Interacts (via the CMP domain) with HIV-1 Tat. In terms of processing, sumoylated. Sumoylation promotes cleavage by caspases. Phosphorylated by PKC. Acetylated by PCAF. Phosphorylated form interacts with HDAC1, but unphosphorylated form interacts with PCAF. DNA binding properties are activated by phosphorylation and inactivated by acetylation. In opposition, gene expression is down-regulated by phosphorylation but up-regulated by acetylation. Post-translationally, cleaved at Asp-254 by caspase-3 and caspase-6 during T-cell apoptosis in thymus and during B-cell stimulation. The cleaved forms cannot dimerize and lose transcription regulation function because of impaired DNA and chromatin association. Expressed predominantly in thymus.

The protein localises to the nucleus matrix. The protein resides in the nucleus. It localises to the PML body. In terms of biological role, crucial silencing factor contributing to the initiation of X inactivation mediated by Xist RNA that occurs during embryogenesis and in lymphoma. Binds to DNA at special AT-rich sequences, the consensus SATB1-binding sequence (CSBS), at nuclear matrix- or scaffold-associated regions. Thought to recognize the sugar-phosphate structure of double-stranded DNA. Transcriptional repressor controlling nuclear and viral gene expression in a phosphorylated and acetylated status-dependent manner, by binding to matrix attachment regions (MARs) of DNA and inducing a local chromatin-loop remodeling. Acts as a docking site for several chromatin remodeling enzymes (e.g. PML at the MHC-I locus) and also by recruiting corepressors (HDACs) or coactivators (HATs) directly to promoters and enhancers. Modulates genes that are essential in the maturation of the immune T-cell CD8SP from thymocytes. Required for the switching of fetal globin species, and beta- and gamma-globin genes regulation during erythroid differentiation. Plays a role in chromatin organization and nuclear architecture during apoptosis. Interacts with the unique region (UR) of cytomegalovirus (CMV). Alu-like motifs and SATB1-binding sites provide a unique chromatin context which seems preferentially targeted by the HIV-1 integration machinery. Moreover, HIV-1 Tat may overcome SATB1-mediated repression of IL2 and IL2RA (interleukin) in T-cells by binding to the same domain than HDAC1. Delineates specific epigenetic modifications at target gene loci, directly up-regulating metastasis-associated genes while down-regulating tumor-suppressor genes. Reprograms chromatin organization and the transcription profiles of breast tumors to promote growth and metastasis. Promotes neuronal differentiation of neural stem/progenitor cells in the adult subventricular zone, possibly by positively regulating the expression of NEUROD1. The chain is DNA-binding protein SATB1 from Homo sapiens (Human).